The sequence spans 292 residues: uncharacterized protein (292 aa).

2 disordered regions span residues 29–50 and 166–292; these read SEKPVGAPPASQIPGLSDLRDS and VKRK…EELK. Ser50 is modified (phosphoserine). Composition is skewed to polar residues over residues 176–189 and 208–217; these read NSKNSSKAGTPVNN and GSPTNFSKLI. Over residues 221-239 the composition is skewed to basic and acidic residues; the sequence is YKDEWLQQQKADSDRRTPK. Composition is skewed to polar residues over residues 240–250 and 260–270; these read TSEASVSTQST and DTETPQNSETP.

Phosphorylated upon DNA damage.

This is an uncharacterized protein from Rattus norvegicus (Rat).